A 406-amino-acid polypeptide reads, in one-letter code: Acetate kinase (406 aa).

Position 8 (Asn8) interacts with Mg(2+). Residue Lys15 participates in ATP binding. Residue Arg92 coordinates substrate. Asp149 functions as the Proton donor/acceptor in the catalytic mechanism. Residues His209–Gly213, Asp283–Arg285, and Gly331–Asn335 contribute to the ATP site. Glu385 lines the Mg(2+) pocket.

Belongs to the acetokinase family. Homodimer. Requires Mg(2+) as cofactor. It depends on Mn(2+) as a cofactor.

It localises to the cytoplasm. It catalyses the reaction acetate + ATP = acetyl phosphate + ADP. It functions in the pathway metabolic intermediate biosynthesis; acetyl-CoA biosynthesis; acetyl-CoA from acetate: step 1/2. Functionally, catalyzes the formation of acetyl phosphate from acetate and ATP. Can also catalyze the reverse reaction. This Corynebacterium aurimucosum (strain ATCC 700975 / DSM 44827 / CIP 107346 / CN-1) (Corynebacterium nigricans) protein is Acetate kinase.